We begin with the raw amino-acid sequence, 116 residues long: Protein Rev (116 aa).

Phosphoserine; by host CK2 is present on Ser5. A homomultimerization region spans residues Tyr18 to Asn26. Residues Thr34–Arg50 carry the Nuclear localization signal and RNA-binding (RRE) motif. The Nuclear export signal and binding to XPO1 signature appears at Leu73–Asn84. A disordered region spans residues Gly90–Glu116. Ser99 carries the phosphoserine; by host modification.

It belongs to the HIV-1 REV protein family. As to quaternary structure, homomultimer; when bound to the RRE. Multimeric assembly is essential for activity and may involve XPO1. Binds to human KPNB1, XPO1, TNPO1, RANBP5 and IPO7. Interacts with the viral Integrase. Interacts with human KHDRBS1. Interacts with human NAP1; this interaction decreases Rev multimerization and stimulates its activity. Interacts with human DEAD-box helicases DDX3 and DDX24; these interactions may serve for viral RNA export to the cytoplasm and packaging, respectively. Interacts with human PSIP1; this interaction may inhibit HIV-1 DNA integration by promoting dissociation of the Integrase-LEDGF/p75 complex. Asymmetrically arginine dimethylated at one site by host PRMT6. Methylation impairs the RNA-binding activity and export of viral RNA from the nucleus to the cytoplasm. Post-translationally, phosphorylated by protein kinase CK2. Presence of, and maybe binding to the N-terminus of the regulatory beta subunit of CK2 is necessary for CK2-mediated Rev's phosphorylation.

The protein localises to the host nucleus. It is found in the host nucleolus. It localises to the host cytoplasm. Its function is as follows. Escorts unspliced or incompletely spliced viral pre-mRNAs (late transcripts) out of the nucleus of infected cells. These pre-mRNAs carry a recognition sequence called Rev responsive element (RRE) located in the env gene, that is not present in fully spliced viral mRNAs (early transcripts). This function is essential since most viral proteins are translated from unspliced or partially spliced pre-mRNAs which cannot exit the nucleus by the pathway used by fully processed cellular mRNAs. Rev itself is translated from a fully spliced mRNA that readily exits the nucleus. Rev's nuclear localization signal (NLS) binds directly to KPNB1/Importin beta-1 without previous binding to KPNA1/Importin alpha-1. KPNB1 binds to the GDP bound form of RAN (Ran-GDP) and targets Rev to the nucleus. In the nucleus, the conversion from Ran-GDP to Ran-GTP dissociates Rev from KPNB1 and allows Rev's binding to the RRE in viral pre-mRNAs. Rev multimerization on the RRE via cooperative assembly exposes its nuclear export signal (NES) to the surface. Rev can then form a complex with XPO1/CRM1 and Ran-GTP, leading to nuclear export of the complex. Conversion from Ran-GTP to Ran-GDP mediates dissociation of the Rev/RRE/XPO1/RAN complex, so that Rev can return to the nucleus for a subsequent round of export. Beside KPNB1, also seems to interact with TNPO1/Transportin-1, RANBP5/IPO5 and IPO7/RANBP7 for nuclear import. The nucleoporin-like HRB/RIP is an essential cofactor that probably indirectly interacts with Rev to release HIV RNAs from the perinuclear region to the cytoplasm. This Human immunodeficiency virus type 1 group M subtype F2 (isolate MP257) (HIV-1) protein is Protein Rev.